A 212-amino-acid polypeptide reads, in one-letter code: Large ribosomal subunit protein uL3 (212 aa).

The disordered stretch occupies residues 131-155 (RGNMTHGSKNHRLPGSTGAGTTPGR).

This sequence belongs to the universal ribosomal protein uL3 family. Part of the 50S ribosomal subunit. Forms a cluster with proteins L14 and L19.

In terms of biological role, one of the primary rRNA binding proteins, it binds directly near the 3'-end of the 23S rRNA, where it nucleates assembly of the 50S subunit. The sequence is that of Large ribosomal subunit protein uL3 from Microcystis aeruginosa (strain NIES-843 / IAM M-2473).